A 324-amino-acid polypeptide reads, in one-letter code: ATP phosphoribosyltransferase regulatory subunit (324 aa).

This sequence belongs to the class-II aminoacyl-tRNA synthetase family. HisZ subfamily. As to quaternary structure, heteromultimer composed of HisG and HisZ subunits.

It localises to the cytoplasm. It functions in the pathway amino-acid biosynthesis; L-histidine biosynthesis; L-histidine from 5-phospho-alpha-D-ribose 1-diphosphate: step 1/9. Required for the first step of histidine biosynthesis. May allow the feedback regulation of ATP phosphoribosyltransferase activity by histidine. This Carboxydothermus hydrogenoformans (strain ATCC BAA-161 / DSM 6008 / Z-2901) protein is ATP phosphoribosyltransferase regulatory subunit.